The chain runs to 324 residues: Protein FAM228B (324 aa).

Belongs to the FAM228 family.

The sequence is that of Protein FAM228B (FAM228B) from Homo sapiens (Human).